A 516-amino-acid polypeptide reads, in one-letter code: Cilia- and flagella-associated protein 53 (516 aa).

Coiled-coil stretches lie at residues 217–283 and 316–440; these read EEKK…LQVK and MQGY…RQMK. 2 stretches are compositionally biased toward basic and acidic residues: residues 417–436 and 461–472; these read KELL…DRNA and QAEREEEQREFE. 2 disordered regions span residues 417 to 443 and 455 to 475; these read KELL…KVAQ and YQQS…EAGL.

It belongs to the CFAP53 family.

The protein resides in the cytoplasm. The protein localises to the cytoskeleton. Its subcellular location is the cilium axoneme. It localises to the microtubule organizing center. It is found in the centrosome. The protein resides in the centriolar satellite. Microtubule inner protein (MIP) part of the dynein-decorated doublet microtubules (DMTs) in cilia axoneme, which is required for motile cilia beating. Regulates motility patterns of both 9+0 and 9+2 motile cilia through differential localization and recruitment of axonemal dynein components. Required for motile cilium formation and movement. Involved in the establishment of left-right symmetry during embryogenesis. This Xenopus laevis (African clawed frog) protein is Cilia- and flagella-associated protein 53.